We begin with the raw amino-acid sequence, 191 residues long: LOB domain-containing protein 19 (191 aa).

Residues 15–117 form the LOB domain; it reads GPCGACKFLR…AELAHVQARL (103 aa).

It belongs to the LOB domain-containing protein family. As to expression, expressed in shoots, roots and floral tissues, but not in stems or leaves.

This is LOB domain-containing protein 19 (LBD19) from Arabidopsis thaliana (Mouse-ear cress).